The sequence spans 702 residues: Pheromone-processing carboxypeptidase KEX1 (702 aa).

The N-terminal stretch at Met1–Ala19 is a signal peptide. Residues Leu20–Arg555 lie on the Lumenal side of the membrane. N-linked (GlcNAc...) asparagine glycosylation is found at Asn85 and Asn122. Active-site residues include Ser184 and Asp394. N-linked (GlcNAc...) asparagine glycosylation is found at Asn441 and Asn449. Residue His452 is part of the active site. The disordered stretch occupies residues Ser491–Ser531. The chain crosses the membrane as a helical span at residues Leu556–Tyr576. Over Lys577 to Asn702 the chain is Cytoplasmic. Disordered stretches follow at residues Ser582–Lys603 and Asp659–Asn702. Composition is skewed to polar residues over residues Pro587 to Ser598 and Ala692 to Asn702.

The protein belongs to the peptidase S10 family.

The protein resides in the golgi apparatus. Its subcellular location is the trans-Golgi network membrane. It catalyses the reaction Preferential release of a C-terminal arginine or lysine residue.. Its function is as follows. Protease with a carboxypeptidase B-like function involved in the C-terminal processing of the lysine and arginine residues from protein precursors. Promotes cell fusion and is involved in the programmed cell death. The protein is Pheromone-processing carboxypeptidase KEX1 (KEX1) of Candida albicans (strain WO-1) (Yeast).